Here is a 149-residue protein sequence, read N- to C-terminus: D-aminoacyl-tRNA deacylase (149 aa).

Residues 137–138 (GP) carry the Gly-cisPro motif, important for rejection of L-amino acids motif.

It belongs to the DTD family. In terms of assembly, homodimer.

Its subcellular location is the cytoplasm. It catalyses the reaction glycyl-tRNA(Ala) + H2O = tRNA(Ala) + glycine + H(+). The catalysed reaction is a D-aminoacyl-tRNA + H2O = a tRNA + a D-alpha-amino acid + H(+). An aminoacyl-tRNA editing enzyme that deacylates mischarged D-aminoacyl-tRNAs. Also deacylates mischarged glycyl-tRNA(Ala), protecting cells against glycine mischarging by AlaRS. Acts via tRNA-based rather than protein-based catalysis; rejects L-amino acids rather than detecting D-amino acids in the active site. By recycling D-aminoacyl-tRNA to D-amino acids and free tRNA molecules, this enzyme counteracts the toxicity associated with the formation of D-aminoacyl-tRNA entities in vivo and helps enforce protein L-homochirality. The sequence is that of D-aminoacyl-tRNA deacylase from Clostridium beijerinckii (strain ATCC 51743 / NCIMB 8052) (Clostridium acetobutylicum).